A 151-amino-acid polypeptide reads, in one-letter code: Nucleoside diphosphate kinase (151 aa).

6 residues coordinate ATP: Lys-11, Phe-59, Arg-87, Thr-93, Arg-104, and Asn-114. His-117 functions as the Pros-phosphohistidine intermediate in the catalytic mechanism.

The protein belongs to the NDK family. Homotetramer. Requires Mg(2+) as cofactor.

It localises to the cytoplasm. It catalyses the reaction a 2'-deoxyribonucleoside 5'-diphosphate + ATP = a 2'-deoxyribonucleoside 5'-triphosphate + ADP. The enzyme catalyses a ribonucleoside 5'-diphosphate + ATP = a ribonucleoside 5'-triphosphate + ADP. In terms of biological role, major role in the synthesis of nucleoside triphosphates other than ATP. The ATP gamma phosphate is transferred to the NDP beta phosphate via a ping-pong mechanism, using a phosphorylated active-site intermediate. In Prochlorococcus marinus (strain NATL1A), this protein is Nucleoside diphosphate kinase.